The sequence spans 375 residues: Growth/differentiation factor 8 (375 aa).

Residues 1 to 18 form the signal peptide; the sequence is MQKLQISVYIYLFMLIVA. Positions 19-266 are excised as a propeptide; the sequence is GPVDLNENSE…VTDTPKRSRR (248 aa). Residues N47 and N71 are each glycosylated (N-linked (GlcNAc...) asparagine). 4 cysteine pairs are disulfide-bonded: C272/C282, C281/C340, C309/C372, and C313/C374.

The protein belongs to the TGF-beta family. Homodimer; disulfide-linked. Interacts with WFIKKN2, leading to inhibit its activity. Interacts with FSTL3. Synthesized as large precursor molecule that undergoes proteolytic cleavage to generate an N-terminal propeptide and a disulfide linked C-terminal dimer, which is the biologically active molecule. The circulating form consists of a latent complex of the C-terminal dimer and other proteins, including its propeptide, which maintain the C-terminal dimer in a latent, inactive state. Ligand activation requires additional cleavage of the prodomain by a tolloid-like metalloproteinase.

The protein localises to the secreted. Functionally, acts specifically as a negative regulator of skeletal muscle growth. The chain is Growth/differentiation factor 8 (MSTN) from Bos gaurus (Seladang).